The chain runs to 315 residues: Olfactory receptor 3A1 (315 aa).

The Extracellular portion of the chain corresponds to 1-28 (MQPESGANGTVIAEFILLGLLEAPGLQP). Residue N8 is glycosylated (N-linked (GlcNAc...) asparagine). Residues 29–52 (VVFVLFLFAYLVTVGGNLSILAAV) traverse the membrane as a helical segment. At 53–60 (LVEPKLHS) the chain is on the cytoplasmic side. Residues 61 to 82 (PMYFFLGNLSVLDVGCISVTVP) form a helical membrane-spanning segment. The Extracellular portion of the chain corresponds to 83-103 (SMLSRLLSRKRAVPCGACLTQ). A disulfide bridge links C100 with C192. The helical transmembrane segment at 104–123 (LFFFHLFVGVDCFLLTAMAY) threads the bilayer. Topologically, residues 124 to 143 (DRFLAICRPLTYSTRMSQTV) are cytoplasmic. A helical membrane pass occupies residues 144-161 (QRMLVAASWACAFTNALT). Residues 162-199 (HTVAMSTLNFCGPNEVNHFYCDLPQLFQLSCSSTQLNE) are Extracellular-facing. Residues 200–223 (LLLFAVGFIMAGTPMALIVISYIH) form a helical membrane-spanning segment. Over 224 to 240 (VAAAVLRIRSVEGRKKA) the chain is Cytoplasmic. Residues 241 to 264 (FSTCGSHLTVVAMFYGSGIFNYMR) form a helical membrane-spanning segment. The Extracellular portion of the chain corresponds to 265–275 (LGSTKLSDKDK). The chain crosses the membrane as a helical span at residues 276-295 (AVGIFNTVINPMVNPIIYRF). Residues 296-315 (RNPEVQSAIWRMLTGRRSLA) are Cytoplasmic-facing.

This sequence belongs to the G-protein coupled receptor 1 family.

The protein localises to the cell membrane. In terms of biological role, odorant receptor. This is Olfactory receptor 3A1 (OR3A1) from Pan troglodytes (Chimpanzee).